The primary structure comprises 270 residues: Tryptophan synthase alpha chain (270 aa).

Active-site proton acceptor residues include glutamate 49 and aspartate 60.

Belongs to the TrpA family. In terms of assembly, tetramer of two alpha and two beta chains.

The enzyme catalyses (1S,2R)-1-C-(indol-3-yl)glycerol 3-phosphate + L-serine = D-glyceraldehyde 3-phosphate + L-tryptophan + H2O. Its pathway is amino-acid biosynthesis; L-tryptophan biosynthesis; L-tryptophan from chorismate: step 5/5. The alpha subunit is responsible for the aldol cleavage of indoleglycerol phosphate to indole and glyceraldehyde 3-phosphate. The polypeptide is Tryptophan synthase alpha chain (Paraburkholderia phytofirmans (strain DSM 17436 / LMG 22146 / PsJN) (Burkholderia phytofirmans)).